We begin with the raw amino-acid sequence, 208 residues long: PITH domain-containing protein ZK353.9 (208 aa).

The PITH domain maps to 17–189 (EVPGDDVYRY…RIAIATYESR (173 aa)).

The protein belongs to the PITHD1 family.

The sequence is that of PITH domain-containing protein ZK353.9 from Caenorhabditis elegans.